A 124-amino-acid polypeptide reads, in one-letter code: ATP synthase epsilon chain (124 aa).

Belongs to the ATPase epsilon chain family. F-type ATPases have 2 components, CF(1) - the catalytic core - and CF(0) - the membrane proton channel. CF(1) has five subunits: alpha(3), beta(3), gamma(1), delta(1), epsilon(1). CF(0) has three main subunits: a, b and c.

It localises to the cell membrane. In terms of biological role, produces ATP from ADP in the presence of a proton gradient across the membrane. This Corynebacterium efficiens (strain DSM 44549 / YS-314 / AJ 12310 / JCM 11189 / NBRC 100395) protein is ATP synthase epsilon chain.